A 350-amino-acid polypeptide reads, in one-letter code: Mitochondrial glycine transporter (350 aa).

Solcar repeat units lie at residues 23 to 107, 134 to 218, and 250 to 334; these read SKPK…LRQC, LSHT…SKKN, and SSIS…LILK. The next 6 membrane-spanning stretches (helical) occupy residues 29–54, 82–108, 140–165, 193–216, 254–280, and 309–327; these read FIAGLASGLSSAILLQPADLLKTRIQ, GTLPSALRTGFGSALYFSSLNALRQCI, LLTGAMARTAAGFIMMPVTVIKVRYE, GFGATAIRDAPYAGLYVVFYEQSK, VNFVSGALAAGLATSITNPFDVVKTRL, and GLGLRMGRKAISSALAWTV.

It belongs to the mitochondrial carrier (TC 2.A.29) family. SLC25A38 subfamily.

It is found in the mitochondrion inner membrane. The catalysed reaction is glycine(in) = glycine(out). Its function is as follows. Mitochondrial glycine transporter that imports glycine into the mitochondrial matrix. Plays an important role in providing glycine for the first enzymatic step in heme biosynthesis, the condensation of glycine with succinyl-CoA to produce 5-aminolevulinate (ALA) in the mitochondrial matrix. This chain is Mitochondrial glycine transporter, found in Ajellomyces capsulatus (strain NAm1 / WU24) (Darling's disease fungus).